The following is a 505-amino-acid chain: Lysine--tRNA ligase (505 aa).

Mg(2+) is bound by residues Glu-415 and Glu-422.

The protein belongs to the class-II aminoacyl-tRNA synthetase family. Homodimer. Requires Mg(2+) as cofactor.

It is found in the cytoplasm. The enzyme catalyses tRNA(Lys) + L-lysine + ATP = L-lysyl-tRNA(Lys) + AMP + diphosphate. The protein is Lysine--tRNA ligase of Xanthomonas campestris pv. campestris (strain 8004).